A 371-amino-acid polypeptide reads, in one-letter code: S-adenosylmethionine:tRNA ribosyltransferase-isomerase (371 aa).

It belongs to the QueA family. In terms of assembly, monomer.

Its subcellular location is the cytoplasm. It carries out the reaction 7-aminomethyl-7-carbaguanosine(34) in tRNA + S-adenosyl-L-methionine = epoxyqueuosine(34) in tRNA + adenine + L-methionine + 2 H(+). It functions in the pathway tRNA modification; tRNA-queuosine biosynthesis. Functionally, transfers and isomerizes the ribose moiety from AdoMet to the 7-aminomethyl group of 7-deazaguanine (preQ1-tRNA) to give epoxyqueuosine (oQ-tRNA). This is S-adenosylmethionine:tRNA ribosyltransferase-isomerase from Prochlorococcus marinus (strain MIT 9313).